The primary structure comprises 795 residues: Lon protease (795 aa).

Residues 17–214 (YPLMPLRDIV…KVYKFLQDEI (198 aa)) enclose the Lon N-terminal domain. Residue 370-377 (GPPGVGKT) participates in ATP binding. Positions 605–787 (KPLVGVATGL…EEVFKIALVR (183 aa)) constitute a Lon proteolytic domain. Catalysis depends on residues Ser692 and Lys735.

This sequence belongs to the peptidase S16 family. As to quaternary structure, homohexamer. Organized in a ring with a central cavity.

The protein resides in the cytoplasm. It catalyses the reaction Hydrolysis of proteins in presence of ATP.. In terms of biological role, ATP-dependent serine protease that mediates the selective degradation of mutant and abnormal proteins as well as certain short-lived regulatory proteins. Required for cellular homeostasis and for survival from DNA damage and developmental changes induced by stress. Degrades polypeptides processively to yield small peptide fragments that are 5 to 10 amino acids long. Binds to DNA in a double-stranded, site-specific manner. In Aquifex aeolicus (strain VF5), this protein is Lon protease.